The chain runs to 273 residues: uncharacterized protein (273 aa).

Residues 7–25 form a helical membrane-spanning segment; it reads FFRWAFLIATVYVAYYFLV. Disordered stretches follow at residues 34-154 and 168-273; these read KPQK…LKMK and LHNS…DSLW. The span at 36–54 shows a compositional bias: basic residues; that stretch reads QKSKLTKLGKQKQRQKQKN. Basic and acidic residues predominate over residues 55-91; sequence TKKDTLVNRETPSKKSQKLETSDALKSKSKDSSKKEP. Over residues 92-101 the composition is skewed to low complexity; it reads VVVPKKGTPK. Residues 115-144 are compositionally biased toward basic and acidic residues; that stretch reads PKKEKLVGKNPAEKEDTTDVEDTQKLEQKH. The segment covering 145-154 has biased composition (polar residues); the sequence is STTPSSLKMK. Positions 201–212 are enriched in basic residues; sequence KRQRQNQQKKLR. The span at 213–240 shows a compositional bias: basic and acidic residues; sequence AKEMQELADEEQRRRLAAHRKELHEANR. A compositionally biased stretch (polar residues) spans 245 to 266; that stretch reads LNNSSRSAYSYINNGQAGSSKG.

The protein resides in the cytoplasm. The protein localises to the membrane. This is an uncharacterized protein from Schizosaccharomyces pombe (strain 972 / ATCC 24843) (Fission yeast).